Reading from the N-terminus, the 828-residue chain is DNA gyrase subunit A (828 aa).

In terms of domain architecture, Topo IIA-type catalytic spans Leu32–Leu497. The active-site O-(5'-phospho-DNA)-tyrosine intermediate is Tyr120. The GyrA-box motif lies at Gln524–Gly530.

This sequence belongs to the type II topoisomerase GyrA/ParC subunit family. In terms of assembly, heterotetramer, composed of two GyrA and two GyrB chains. In the heterotetramer, GyrA contains the active site tyrosine that forms a transient covalent intermediate with DNA, while GyrB binds cofactors and catalyzes ATP hydrolysis.

The protein resides in the cytoplasm. The catalysed reaction is ATP-dependent breakage, passage and rejoining of double-stranded DNA.. Functionally, a type II topoisomerase that negatively supercoils closed circular double-stranded (ds) DNA in an ATP-dependent manner to modulate DNA topology and maintain chromosomes in an underwound state. Negative supercoiling favors strand separation, and DNA replication, transcription, recombination and repair, all of which involve strand separation. Also able to catalyze the interconversion of other topological isomers of dsDNA rings, including catenanes and knotted rings. Type II topoisomerases break and join 2 DNA strands simultaneously in an ATP-dependent manner. This is DNA gyrase subunit A from Streptococcus pyogenes serotype M6 (strain ATCC BAA-946 / MGAS10394).